The following is a 547-amino-acid chain: MFS-type transporter M6 (547 aa).

Positions Met-1–Lys-45 are disordered. A helical transmembrane segment spans residues Val-81–Pro-101. A glycan (N-linked (GlcNAc...) asparagine) is linked at Asn-118. A helical membrane pass occupies residues Pro-146 to Asn-166. An N-linked (GlcNAc...) asparagine glycan is attached at Asn-167. Transmembrane regions (helical) follow at residues Leu-206–Leu-226 and Val-236–Gly-256. The N-linked (GlcNAc...) asparagine glycan is linked to Asn-274. 5 consecutive transmembrane segments (helical) span residues Phe-317 to Leu-337, Tyr-347 to Tyr-367, Leu-407 to Gln-427, Ala-432 to Met-452, and Ala-469 to Val-489. An N-linked (GlcNAc...) asparagine glycan is attached at Asn-493. A helical membrane pass occupies residues Ala-496–Leu-516.

Belongs to the major facilitator superfamily. CAR1 family.

It localises to the membrane. MFS-type transporter; part of the gene cluster that mediates the biosynthesis of squalestatin S1 (SQS1, also known as zaragozic acid A), a heavily oxidized fungal polyketide that offers potent cholesterol lowering activity by targeting squalene synthase (SS). This chain is MFS-type transporter M6, found in Phoma sp. (strain ATCC 20986 / MF5453).